A 785-amino-acid chain; its full sequence is LPS-assembly protein LptD (785 aa).

Residues 1–58 form the signal peptide; that stretch reads MSCSCLCMSLYRGADRIGRFYTAHCPQDMALCMHRQKLNPLALALAAAFALNAPAALA.

Belongs to the LptD family. Component of the lipopolysaccharide transport and assembly complex. Interacts with LptE and LptA.

It localises to the cell outer membrane. Together with LptE, is involved in the assembly of lipopolysaccharide (LPS) at the surface of the outer membrane. This chain is LPS-assembly protein LptD, found in Chromobacterium violaceum (strain ATCC 12472 / DSM 30191 / JCM 1249 / CCUG 213 / NBRC 12614 / NCIMB 9131 / NCTC 9757 / MK).